The sequence spans 348 residues: Protein RecA (348 aa).

64-71 provides a ligand contact to ATP; it reads GPESSGKT. Basic and acidic residues predominate over residues 324 to 335; it reads EYEIDGSNKEPL. The tract at residues 324–348 is disordered; that stretch reads EYEIDGSNKEPLAETEETLSLLDDE. Residues 336–348 show a composition bias toward acidic residues; it reads AETEETLSLLDDE.

This sequence belongs to the RecA family.

The protein resides in the cytoplasm. Can catalyze the hydrolysis of ATP in the presence of single-stranded DNA, the ATP-dependent uptake of single-stranded DNA by duplex DNA, and the ATP-dependent hybridization of homologous single-stranded DNAs. It interacts with LexA causing its activation and leading to its autocatalytic cleavage. This is Protein RecA from Listeria ivanovii.